Consider the following 282-residue polypeptide: Transcription factor BC1 (282 aa).

Residues 34 to 123 are disordered; sequence TTAPAIPEDA…ATDSHSLAER (90 aa). The span at 45–55 shows a compositional bias: polar residues; sequence METSSVVLDTS. A compositionally biased stretch (basic and acidic residues) spans 75 to 84; that stretch reads HSKEAKENGR. The short motif at 109–116 is the Nuclear localization signal element; sequence ARRGQATD. The segment at 113–126 is basic motif; degenerate; that stretch reads QATDSHSLAERVRR. One can recognise a bHLH domain in the interval 113 to 163; it reads QATDSHSLAERVRRERISERMRMLQALVPGCDKVTGKALILDEIINYVQSL. Positions 127 to 163 are helix-loop-helix motif; that stretch reads ERISERMRMLQALVPGCDKVTGKALILDEIINYVQSL. Residues 219-251 are disordered; that stretch reads PAQSHAIMDTSNTSPTPYTLQVQGGSNNNSLSQ.

Belongs to the bHLH protein family. Homodimer. Component of a nuclear cell elongation controlling complex made of ILI5/BUL1, LO9-177 and BC1. Interacts with ILI5/BUL1 only in the presence of LO9-177. Interacts with IBH1. Binds to LO9-177 in the nucleus. Interacts with BCL1. As to expression, preferentially present in anthers and leaves lamina joints. Expressed in seedlings, leaves sheaths, collars and panicles.

The protein localises to the nucleus. In terms of biological role, transcription activator that contributes, together with LO9-177 and ILI5/BUL1, to the promotion of leaf inclination and grain size by modulating cell elongation. Involved in the RLI1-dependent modulation of leaf inclination by promoting lamina joint cell elongation, especially in response to phosphate (Pi) availability. The polypeptide is Transcription factor BC1 (Oryza sativa subsp. japonica (Rice)).